Reading from the N-terminus, the 199-residue chain is Small ribosomal subunit protein uS4 (199 aa).

The S4 RNA-binding domain occupies Arg-106 to Ile-170. The tract at residues Pro-177 to Glu-199 is disordered.

It belongs to the universal ribosomal protein uS4 family. Part of the 30S ribosomal subunit. Contacts protein S5. The interaction surface between S4 and S5 is involved in control of translational fidelity.

Its function is as follows. One of the primary rRNA binding proteins, it binds directly to 16S rRNA where it nucleates assembly of the body of the 30S subunit. In terms of biological role, with S5 and S12 plays an important role in translational accuracy. In Thermoplasma acidophilum (strain ATCC 25905 / DSM 1728 / JCM 9062 / NBRC 15155 / AMRC-C165), this protein is Small ribosomal subunit protein uS4.